The following is a 469-amino-acid chain: Putative dipeptidase SAR1836 (469 aa).

Position 84 (H84) interacts with Zn(2+). D86 is an active-site residue. D115 is a Zn(2+) binding site. The active-site Proton acceptor is the E149. Residues E150, D173, and H440 each coordinate Zn(2+).

The protein belongs to the peptidase M20A family. The cofactor is Zn(2+).

The polypeptide is Putative dipeptidase SAR1836 (Staphylococcus aureus (strain MRSA252)).